Here is an 838-residue protein sequence, read N- to C-terminus: E3 ubiquitin-protein ligase RNF19A (838 aa).

Residues 128 to 351 (DFIECPLCLL…LSPSGCTFWG (224 aa)) form a TRIAD supradomain region. Zn(2+) contacts are provided by Cys-132, Cys-135, Cys-150, His-152, Cys-155, Cys-158, Cys-176, Cys-179, Cys-219, Cys-224, Cys-241, Cys-246, Cys-251, Cys-254, His-259, Cys-264, Cys-301, and Cys-304. Residues 132–179 (CPLCLLRHSKDRFPEIMTCHHRSCVDCLRQYLRIEISESRVNISCPEC) form an RING-type 1 zinc finger. The segment at 199 to 264 (EKYEEFMLRR…KQIWHPNQTC (66 aa)) adopts an IBR-type zinc-finger fold. The segment at 301–332 (CPRCAAYIIKMNDGSCNHMTCAVCGCEFCWLC) adopts an RING-type 2; atypical zinc-finger fold. Residue Cys-316 is part of the active site. 6 residues coordinate Zn(2+): Cys-321, Cys-324, Cys-329, Cys-332, His-340, and Cys-347. 2 helical membrane-spanning segments follow: residues 368-388 (LVGA…AMII) and 424-444 (VIVS…IMLA). Disordered stretches follow at residues 622–685 (SKPS…SNMK) and 700–721 (QQST…PSVA). The residue at position 631 (Ser-631) is a Phosphoserine. Over residues 631-644 (SGSSSVDDGSAARS) the composition is skewed to low complexity. Positions 660–838 (ATKWSKEATA…ELKVAIQTDI (179 aa)) are interaction with CASR. Positions 671 to 683 (KKSKSGKLRKKSN) are enriched in basic residues. The segment covering 700–717 (QQSTNSSEFEAPSLSDSM) has biased composition (polar residues).

Belongs to the RBR family. RNF19 subfamily. As to quaternary structure, interacts with UBE2L3 and UBE2L6. Also interacts with transcription factor Sp1. Interacts with SNCAIP, CASR and VCP.

The protein resides in the membrane. Its subcellular location is the cytoplasm. It localises to the cytoskeleton. It is found in the microtubule organizing center. The protein localises to the centrosome. It carries out the reaction [E2 ubiquitin-conjugating enzyme]-S-ubiquitinyl-L-cysteine + [acceptor protein]-L-lysine = [E2 ubiquitin-conjugating enzyme]-L-cysteine + [acceptor protein]-N(6)-ubiquitinyl-L-lysine.. It functions in the pathway protein modification; protein ubiquitination. E3 ubiquitin-protein ligase which accepts ubiquitin from E2 ubiquitin-conjugating enzymes UBE2L3 and UBE2L6 in the form of a thioester and then directly transfers the ubiquitin to targeted substrates, such as SNCAIP or CASR. The sequence is that of E3 ubiquitin-protein ligase RNF19A (RNF19A) from Sus scrofa (Pig).